Reading from the N-terminus, the 305-residue chain is MTLPGINKAVLIAGPTASGKSALALELAQKAGGAVINTDSMQVYRDLRVLTARPSLAEEAAVPHRLYGCVDAAVNYSAGHYVRDAKEVLDEVRRGGGLPIFIGGTGLYFKALTRGLSAVPPVPDEVREAVRLRLDRDGVEALHAELARRDAAAAARLNVRDRTRIARALEVIEATGRPLAEWHAETTPPLLPEGSYRALFIAPEREALYARIDARFDAMLADGALEEVARLAARGLDPLLPAMKAHGVPALIRHLRGEITREEAAMIGKADTRHYAKRQFTWFRHQLPEFDWLTPEQARGWVAFL.

14–21 (GPTASGKS) is an ATP binding site. 16–21 (TASGKS) contributes to the substrate binding site. Residues 39–42 (DSMQ) form an interaction with substrate tRNA region.

This sequence belongs to the IPP transferase family. Monomer. Mg(2+) is required as a cofactor.

The enzyme catalyses adenosine(37) in tRNA + dimethylallyl diphosphate = N(6)-dimethylallyladenosine(37) in tRNA + diphosphate. In terms of biological role, catalyzes the transfer of a dimethylallyl group onto the adenine at position 37 in tRNAs that read codons beginning with uridine, leading to the formation of N6-(dimethylallyl)adenosine (i(6)A). In Bradyrhizobium sp. (strain BTAi1 / ATCC BAA-1182), this protein is tRNA dimethylallyltransferase.